Here is a 359-residue protein sequence, read N- to C-terminus: GTP cyclohydrolase FolE2 (359 aa).

The protein belongs to the GTP cyclohydrolase IV family.

The catalysed reaction is GTP + H2O = 7,8-dihydroneopterin 3'-triphosphate + formate + H(+). Its pathway is cofactor biosynthesis; 7,8-dihydroneopterin triphosphate biosynthesis; 7,8-dihydroneopterin triphosphate from GTP: step 1/1. In terms of biological role, converts GTP to 7,8-dihydroneopterin triphosphate. The polypeptide is GTP cyclohydrolase FolE2 (Cereibacter sphaeroides (strain KD131 / KCTC 12085) (Rhodobacter sphaeroides)).